Consider the following 189-residue polypeptide: Potassium-transporting ATPase KdpC subunit (189 aa).

A helical membrane pass occupies residues 6 to 26 (PAILMLIIFTILCGGIYPAVV).

It belongs to the KdpC family. The system is composed of three essential subunits: KdpA, KdpB and KdpC.

It is found in the cell inner membrane. In terms of biological role, part of the high-affinity ATP-driven potassium transport (or Kdp) system, which catalyzes the hydrolysis of ATP coupled with the electrogenic transport of potassium into the cytoplasm. This subunit acts as a catalytic chaperone that increases the ATP-binding affinity of the ATP-hydrolyzing subunit KdpB by the formation of a transient KdpB/KdpC/ATP ternary complex. The sequence is that of Potassium-transporting ATPase KdpC subunit from Geobacter sulfurreducens (strain ATCC 51573 / DSM 12127 / PCA).